The sequence spans 278 residues: Autotransporter adhesin BtaF (278 aa).

A signal peptide spans 1–29 (MKLPPVFVFELVENQGLANIALIRPRVIA). Residues 30-182 (PDNNLRPGGI…RAAIRQNSAA (153 aa)) are surface exposed passenger domain. The tract at residues 186–224 (LGQRVDGLQGQINSARKEARAGAANAAALSGLRYDNRPG) is outer membrane translocation of the passenger domain. The segment at 225 to 278 (KVSIATGVGGFKGSTALAAGIGYTSKNENARYNVSVAYNEAGTSWNAGASFTLN) is translocator domain.

Belongs to the autotransporter-2 (AT-2) (TC 1.B.40) family. In terms of assembly, homotrimer.

Its subcellular location is the cell surface. The protein localises to the cell outer membrane. Functionally, participates in bacterial attachment to several surfaces, including various extracellular matrix (ECM) components and a hydrophobic abiotic surface. Involved in adhesion to host epithelial cells and is required for full virulence in mice. Also implicated in the resistance to porcine serum. This Brucella suis biovar 1 (strain 1330) protein is Autotransporter adhesin BtaF.